A 199-amino-acid chain; its full sequence is dITP/XTP pyrophosphatase (199 aa).

8–13 contacts substrate; that stretch reads SGNAGK. Catalysis depends on D69, which acts as the Proton acceptor. D69 contacts Mg(2+). Substrate is bound by residues S70, 154-157, K177, and 182-183; these read FGYN and HR.

Belongs to the HAM1 NTPase family. As to quaternary structure, homodimer. Mg(2+) is required as a cofactor.

It catalyses the reaction XTP + H2O = XMP + diphosphate + H(+). It carries out the reaction dITP + H2O = dIMP + diphosphate + H(+). The catalysed reaction is ITP + H2O = IMP + diphosphate + H(+). Pyrophosphatase that catalyzes the hydrolysis of nucleoside triphosphates to their monophosphate derivatives, with a high preference for the non-canonical purine nucleotides XTP (xanthosine triphosphate), dITP (deoxyinosine triphosphate) and ITP. Seems to function as a house-cleaning enzyme that removes non-canonical purine nucleotides from the nucleotide pool, thus preventing their incorporation into DNA/RNA and avoiding chromosomal lesions. The protein is dITP/XTP pyrophosphatase of Xylella fastidiosa (strain 9a5c).